The following is a 130-amino-acid chain: Large ribosomal subunit protein bL19 (130 aa).

Belongs to the bacterial ribosomal protein bL19 family.

This protein is located at the 30S-50S ribosomal subunit interface and may play a role in the structure and function of the aminoacyl-tRNA binding site. In Cupriavidus taiwanensis (strain DSM 17343 / BCRC 17206 / CCUG 44338 / CIP 107171 / LMG 19424 / R1) (Ralstonia taiwanensis (strain LMG 19424)), this protein is Large ribosomal subunit protein bL19.